The chain runs to 214 residues: Thymidylate kinase (214 aa).

An ATP-binding site is contributed by 11-18 (GPEGAGKT).

The protein belongs to the thymidylate kinase family.

It catalyses the reaction dTMP + ATP = dTDP + ADP. In terms of biological role, phosphorylation of dTMP to form dTDP in both de novo and salvage pathways of dTTP synthesis. This is Thymidylate kinase from Leuconostoc citreum (strain KM20).